The sequence spans 328 residues: MAAGTAARKAAPVLEAPPQQEQLSHTKLSAEDTWNLQQERMYKMHRGHDSMHVEMILIFLCVLVIAQIVLVQWRQRHGRSYNLVTLLQMWVVPLYFTIKLYWWRFLSMWGMFSVITSYILFRATRKPLSGRTPRLVYKWFLLIYKLSYAFGVVGYLAIMFTMCGFNLFFKIKARDSMDFGIVSLFYGLYYGVMGRDFAEICSDYMASTIGFYSVSRLPTRSLSDNICAVCGQKIIVELDEEGLIENTYQLSCNHVFHEFCIRGWCIVGKKQTCPYCKEKVDLKRMISNPWERTHFLYGQILDWLRYLVAWQPVVIGIVQGIIYSLGLE.

5 consecutive transmembrane segments (helical) span residues 51–71, 83–103, 104–121, 149–169, and 180–200; these read MHVE…IVLV, LVTL…LYWW, RFLS…YILF, AFGV…NLFF, and GIVS…FAEI. The RING-type; atypical zinc finger occupies 227 to 277; sequence CAVCGQKIIVELDEEGLIENTYQLSCNHVFHEFCIRGWCIVGKKQTCPYCK.

It is found in the membrane. The protein is RING finger protein 175 (RNF175) of Homo sapiens (Human).